The chain runs to 405 residues: MDNILNPEDNVSQTNTETDVTDGPFQYVKEEHSSHKFTASGQNLDSPPKNKKSPLKRKAGEPESPSKRPRLEEGHGSLVVTHYNELPETGLETRSQSRIFHLRNFNNWMKSALIGEFVEKVRQRTRNIAVLDLGCGKGGDLLKWRKGGISKLVCTDIADVSVKQCEERYKDLKRKSRNERVFEAEFLTADSTKELLSEKYNDPEIKFDICSCQFVYHYSFETYEQADMMLRNACERLCPGGFFIGTTPDGFELVKRLEASDTNSFGNDVYTVKFEKKGKYPLFGCKYDFSLEEVVNVPEFLVYFPVLVEMAKKYQMKLIYKKTFREFFEEKVKNDEQKMLLKRMKALEPYPAAPNFKLVSGRTEDYEHAQKLVENGQVKLPLGTLSKSEWEATSIYLLFAFEKQA.

Residues 1 to 78 (MDNILNPEDN…PRLEEGHGSL (78 aa)) form a disordered region. Composition is skewed to polar residues over residues 9–18 (DNVSQTNTET) and 36–45 (KFTASGQNLD). Residues 58–75 (KAGEPESPSKRPRLEEGH) are compositionally biased toward basic and acidic residues. In terms of domain architecture, mRNA cap 0 methyltransferase spans 97–404 (SRIFHLRNFN…IYLLFAFEKQ (308 aa)). 106–107 (NN) contacts mRNA. K110, G134, D156, D190, Q213, and Y218 together coordinate S-adenosyl-L-methionine.

The protein belongs to the class I-like SAM-binding methyltransferase superfamily. mRNA cap 0 methyltransferase family.

It is found in the nucleus. It carries out the reaction a 5'-end (5'-triphosphoguanosine)-ribonucleoside in mRNA + S-adenosyl-L-methionine = a 5'-end (N(7)-methyl 5'-triphosphoguanosine)-ribonucleoside in mRNA + S-adenosyl-L-homocysteine. In terms of biological role, catalytic subunit of the mRNA-capping methyltransferase RNMT:RAMAC complex that methylates the N7 position of the added guanosine to the 5'-cap structure of mRNAs. Binds RNA containing 5'-terminal GpppC. In Xenopus tropicalis (Western clawed frog), this protein is mRNA cap guanine-N(7) methyltransferase (rnmt).